The following is a 263-amino-acid chain: LOB domain-containing protein 41 (263 aa).

The 107-residue stretch at 3–109 (MSCNGCRVLR…VEAVMKGEPV (107 aa)) folds into the LOB domain. Residues 162-204 (TVAIQAESEGKSDEASHDSSLSHQSEIVAAHEGESKESESNVS) are disordered. 2 stretches are compositionally biased toward basic and acidic residues: residues 169-178 (SEGKSDEASH) and 190-200 (AAHEGESKESE).

It belongs to the LOB domain-containing protein family. Expressed in young shoots, roots, stems, leaves and flowers.

In Arabidopsis thaliana (Mouse-ear cress), this protein is LOB domain-containing protein 41 (LBD41).